Reading from the N-terminus, the 439-residue chain is C4-dicarboxylate transport protein (439 aa).

9 helical membrane-spanning segments follow: residues 10-30, 45-65, 77-97, 145-165, 185-205, 223-243, 290-310, 332-352, and 353-373; these read LYVQ…FYPP, LIKM…IAGM, LALL…LVLV, AFAK…GFAL, VLFA…FGAM, LMGT…GTIT, VVGL…AIYL, TLLA…GSGF, and IVLA…LALI. The disordered stretch occupies residues 415–439; sequence LNGQTAEEASAPQALPDRMESRIHH.

Belongs to the dicarboxylate/amino acid:cation symporter (DAACS) (TC 2.A.23) family.

The protein resides in the cell inner membrane. Responsible for the transport of dicarboxylates such as succinate, fumarate, and malate from the periplasm across the membrane. The protein is C4-dicarboxylate transport protein of Verminephrobacter eiseniae (strain EF01-2).